A 601-amino-acid polypeptide reads, in one-letter code: Glutathione-regulated potassium-efflux system protein KefB (601 aa).

A run of 13 helical transmembrane segments spans residues A4–A24, I29–F49, E55–L75, I87–M107, F111–A131, V152–G172, H177–G197, F207–S227, L230–L250, A262–L282, L284–I304, M324–A344, and A356–I376. In terms of domain architecture, RCK N-terminal spans K400–T519.

It belongs to the monovalent cation:proton antiporter 2 (CPA2) transporter (TC 2.A.37) family. KefB subfamily. As to quaternary structure, interacts with the regulatory subunit KefG.

Its subcellular location is the cell inner membrane. Functionally, pore-forming subunit of a potassium efflux system that confers protection against electrophiles. Catalyzes K(+)/H(+) antiport. The sequence is that of Glutathione-regulated potassium-efflux system protein KefB from Salmonella schwarzengrund (strain CVM19633).